Reading from the N-terminus, the 234-residue chain is N-(5'-phosphoribosyl)anthranilate isomerase 1 (234 aa).

The protein belongs to the TrpF family.

The enzyme catalyses N-(5-phospho-beta-D-ribosyl)anthranilate = 1-(2-carboxyphenylamino)-1-deoxy-D-ribulose 5-phosphate. The protein operates within amino-acid biosynthesis; L-tryptophan biosynthesis; L-tryptophan from chorismate: step 3/5. This chain is N-(5'-phosphoribosyl)anthranilate isomerase 1 (trpF1), found in Methanosarcina mazei (strain ATCC BAA-159 / DSM 3647 / Goe1 / Go1 / JCM 11833 / OCM 88) (Methanosarcina frisia).